Consider the following 120-residue polypeptide: MASSMSLKLACVVVLCMVVGAPLAQGAVTSGQVTNSLAPCINYLRGSGAGAVPPGCCTGIKSLNSAAQTTPVRQAACRCIKSAAAGITGINFGLASGLPGKCGVNIPYKISPSTDCNSVK.

A signal peptide spans 1-26 (MASSMSLKLACVVVLCMVVGAPLAQG). Disulfide bonds link Cys40–Cys56, Cys57–Cys102, and Cys77–Cys116.

Belongs to the plant LTP family.

Its function is as follows. Plant non-specific lipid-transfer proteins transfer phospholipids as well as galactolipids across membranes. May play a role in wax or cutin deposition in the cell walls of expanding epidermal cells and certain secretory tissues. This Gossypium hirsutum (Upland cotton) protein is Non-specific lipid-transfer protein.